The sequence spans 315 residues: Ribose-phosphate pyrophosphokinase (315 aa).

ATP-binding positions include D41–E43 and R100–Q101. H134 and D173 together coordinate Mg(2+). The active site involves K196. Residues R198, D222, and D226–T230 contribute to the D-ribose 5-phosphate site.

Belongs to the ribose-phosphate pyrophosphokinase family. Class I subfamily. Homohexamer. Mg(2+) is required as a cofactor.

The protein localises to the cytoplasm. It catalyses the reaction D-ribose 5-phosphate + ATP = 5-phospho-alpha-D-ribose 1-diphosphate + AMP + H(+). It functions in the pathway metabolic intermediate biosynthesis; 5-phospho-alpha-D-ribose 1-diphosphate biosynthesis; 5-phospho-alpha-D-ribose 1-diphosphate from D-ribose 5-phosphate (route I): step 1/1. Functionally, involved in the biosynthesis of the central metabolite phospho-alpha-D-ribosyl-1-pyrophosphate (PRPP) via the transfer of pyrophosphoryl group from ATP to 1-hydroxyl of ribose-5-phosphate (Rib-5-P). In Bacillus caldolyticus, this protein is Ribose-phosphate pyrophosphokinase.